Reading from the N-terminus, the 287-residue chain is Light-independent protochlorophyllide reductase iron-sulfur ATP-binding protein (287 aa).

ATP contacts are provided by residues 10–15 (GIGKST) and Lys39. Mg(2+) is bound at residue Ser14. [4Fe-4S] cluster is bound by residues Cys95 and Cys129. 180 to 181 (NR) is an ATP binding site.

This sequence belongs to the NifH/BchL/ChlL family. Homodimer. Protochlorophyllide reductase is composed of three subunits; ChlL, ChlN and ChlB. It depends on [4Fe-4S] cluster as a cofactor.

It localises to the plastid. The protein resides in the chloroplast. It catalyses the reaction chlorophyllide a + oxidized 2[4Fe-4S]-[ferredoxin] + 2 ADP + 2 phosphate = protochlorophyllide a + reduced 2[4Fe-4S]-[ferredoxin] + 2 ATP + 2 H2O. It functions in the pathway porphyrin-containing compound metabolism; chlorophyll biosynthesis (light-independent). In terms of biological role, component of the dark-operative protochlorophyllide reductase (DPOR) that uses Mg-ATP and reduced ferredoxin to reduce ring D of protochlorophyllide (Pchlide) to form chlorophyllide a (Chlide). This reaction is light-independent. The L component serves as a unique electron donor to the NB-component of the complex, and binds Mg-ATP. This is Light-independent protochlorophyllide reductase iron-sulfur ATP-binding protein from Nephroselmis olivacea (Green alga).